Reading from the N-terminus, the 262-residue chain is Tryptophan synthase alpha chain (262 aa).

Residues Glu48 and Asp59 each act as proton acceptor in the active site.

It belongs to the TrpA family. Tetramer of two alpha and two beta chains.

It catalyses the reaction (1S,2R)-1-C-(indol-3-yl)glycerol 3-phosphate + L-serine = D-glyceraldehyde 3-phosphate + L-tryptophan + H2O. Its pathway is amino-acid biosynthesis; L-tryptophan biosynthesis; L-tryptophan from chorismate: step 5/5. Functionally, the alpha subunit is responsible for the aldol cleavage of indoleglycerol phosphate to indole and glyceraldehyde 3-phosphate. The chain is Tryptophan synthase alpha chain from Helicobacter pylori (strain HPAG1).